The chain runs to 613 residues: Dihydroxy-acid dehydratase (613 aa).

Mg(2+) is bound at residue Asp-81. Cys-122 contacts [2Fe-2S] cluster. Residues Asp-123 and Lys-124 each contribute to the Mg(2+) site. Lys-124 bears the N6-carboxylysine mark. Cys-195 serves as a coordination point for [2Fe-2S] cluster. Glu-491 contributes to the Mg(2+) binding site. Residue Ser-517 is the Proton acceptor of the active site.

This sequence belongs to the IlvD/Edd family. As to quaternary structure, homodimer. It depends on [2Fe-2S] cluster as a cofactor. The cofactor is Mg(2+).

It carries out the reaction (2R)-2,3-dihydroxy-3-methylbutanoate = 3-methyl-2-oxobutanoate + H2O. The enzyme catalyses (2R,3R)-2,3-dihydroxy-3-methylpentanoate = (S)-3-methyl-2-oxopentanoate + H2O. It participates in amino-acid biosynthesis; L-isoleucine biosynthesis; L-isoleucine from 2-oxobutanoate: step 3/4. Its pathway is amino-acid biosynthesis; L-valine biosynthesis; L-valine from pyruvate: step 3/4. Functions in the biosynthesis of branched-chain amino acids. Catalyzes the dehydration of (2R,3R)-2,3-dihydroxy-3-methylpentanoate (2,3-dihydroxy-3-methylvalerate) into 2-oxo-3-methylpentanoate (2-oxo-3-methylvalerate) and of (2R)-2,3-dihydroxy-3-methylbutanoate (2,3-dihydroxyisovalerate) into 2-oxo-3-methylbutanoate (2-oxoisovalerate), the penultimate precursor to L-isoleucine and L-valine, respectively. The chain is Dihydroxy-acid dehydratase from Buchnera aphidicola subsp. Schlechtendalia chinensis.